Consider the following 134-residue polypeptide: Ribosome-binding factor A (134 aa).

Residues 115–134 (EDQRQERGEIPPGSDELQPD) form a disordered region.

This sequence belongs to the RbfA family. In terms of assembly, monomer. Binds 30S ribosomal subunits, but not 50S ribosomal subunits or 70S ribosomes.

It is found in the cytoplasm. Functionally, one of several proteins that assist in the late maturation steps of the functional core of the 30S ribosomal subunit. Associates with free 30S ribosomal subunits (but not with 30S subunits that are part of 70S ribosomes or polysomes). Required for efficient processing of 16S rRNA. May interact with the 5'-terminal helix region of 16S rRNA. The sequence is that of Ribosome-binding factor A from Synechococcus sp. (strain CC9902).